We begin with the raw amino-acid sequence, 432 residues long: 3-phosphoshikimate 1-carboxyvinyltransferase (432 aa).

Residues Lys23, Ser24, and Arg28 each contribute to the 3-phosphoshikimate site. Lys23 contacts phosphoenolpyruvate. Residues Gly95 and Arg123 each coordinate phosphoenolpyruvate. Ser167, Gln169, Asp316, and Lys343 together coordinate 3-phosphoshikimate. Gln169 is a phosphoenolpyruvate binding site. The Proton acceptor role is filled by Asp316. 2 residues coordinate phosphoenolpyruvate: Arg347 and Arg391.

It belongs to the EPSP synthase family. In terms of assembly, monomer.

It is found in the cytoplasm. It carries out the reaction 3-phosphoshikimate + phosphoenolpyruvate = 5-O-(1-carboxyvinyl)-3-phosphoshikimate + phosphate. Its pathway is metabolic intermediate biosynthesis; chorismate biosynthesis; chorismate from D-erythrose 4-phosphate and phosphoenolpyruvate: step 6/7. Catalyzes the transfer of the enolpyruvyl moiety of phosphoenolpyruvate (PEP) to the 5-hydroxyl of shikimate-3-phosphate (S3P) to produce enolpyruvyl shikimate-3-phosphate and inorganic phosphate. The chain is 3-phosphoshikimate 1-carboxyvinyltransferase from Limosilactobacillus fermentum (strain NBRC 3956 / LMG 18251) (Lactobacillus fermentum).